Here is a 365-residue protein sequence, read N- to C-terminus: Neuronal migration protein doublecortin (365 aa).

The tract at residues 11 to 31 is disordered; the sequence is RDKTSRNMRGSRMNGLPSPTH. At threonine 14 the chain carries Phosphothreonine; by PKC. Serine 28 bears the Phosphoserine; by CDK5 mark. Serine 47 carries the post-translational modification Phosphoserine; by MARK1 and PKA. Doublecortin domains lie at 53–139 and 180–263; these read KKVR…VEYT and KLVT…AQDD. At tyrosine 70 the chain carries Phosphotyrosine; by ABL. A Phosphoserine; by PKC modification is found at serine 74. Serine 90 carries the post-translational modification Phosphoserine; by CK2. Serine 110 is subject to Phosphoserine; by PKC. Serine 115 is modified (phosphoserine; by CK2, MARK1 and PKA). Serine 265 carries the phosphoserine; by CK2 modification. The disordered stretch occupies residues 275–365; it reads KGNPSATAGP…DDSDSLGDSM (91 aa). Position 287 is a phosphoserine; by CDK5 (serine 287). Threonine 289 carries the phosphothreonine; by CDK5 modification. Serine 294 is subject to Phosphoserine; by PKC. Serine 297 carries the post-translational modification Phosphoserine; by CDK5. At serine 306 the chain carries Phosphoserine; by CK2. Phosphoserine; by DYRK2 is present on serine 306. The segment covering 307–341 has biased composition (polar residues); the sequence is PADSGNDQDANGTSSSQLSTPKSKQSPISTPTSPG. Threonine 326 bears the Phosphothreonine; by CDK5 mark. A Phosphothreonine; by PKC and MAPK modification is found at threonine 326. Phosphoserine; by CDK5 is present on serine 332. At serine 332 the chain carries Phosphoserine; by MAPK. Residue threonine 336 is modified to Phosphothreonine; by MAPK. Serine 339 is subject to Phosphoserine; by CDK5. Serine 339 bears the Phosphoserine; by MAPK mark. Phosphoserine; by PKC is present on serine 342. Phosphoserine; by CK2 is present on residues serine 354 and serine 360. Acidic residues predominate over residues 356-365; sequence DDSDSLGDSM.

As to quaternary structure, interacts with tubulin. Interacts with USP9X. Phosphorylation by MARK1, MARK2 and PKA regulates its ability to bind microtubules. Phosphorylation at Ser-265 and Ser-297 seems to occur only in neonatal brain, the levels falling precipitously by postnatal day 21. In terms of processing, ubiquitinated by MDM2, leading to its degradation by the proteasome. Ubiquitinated by MDM2 and subsequent degradation leads to reduce the dendritic spine density of olfactory bulb granule cells. Highly expressed in neuronal cells of fetal brain (in the majority of cells of the cortical plate, intermediate zone and ventricular zone), but not expressed in other fetal tissues. In the adult, highly expressed in the brain frontal lobe, but very low expression in other regions of brain, and not detected in heart, placenta, lung, liver, skeletal muscles, kidney and pancreas.

The protein resides in the cytoplasm. It is found in the cell projection. The protein localises to the neuron projection. Its function is as follows. Microtubule-associated protein required for initial steps of neuronal dispersion and cortex lamination during cerebral cortex development. May act by competing with the putative neuronal protein kinase DCLK1 in binding to a target protein. May in that way participate in a signaling pathway that is crucial for neuronal interaction before and during migration, possibly as part of a calcium ion-dependent signal transduction pathway. May be part with PAFAH1B1/LIS-1 of overlapping, but distinct, signaling pathways that promote neuronal migration. The protein is Neuronal migration protein doublecortin (DCX) of Homo sapiens (Human).